The chain runs to 260 residues: Uroplakin-1b (260 aa).

Residues 2-15 are Cytoplasmic-facing; sequence AKDDSTVRCFQGLL. The chain crosses the membrane as a helical span at residues 16 to 36; that stretch reads IFGNVIIGMCSIALMAECIFF. Topologically, residues 37–60 are extracellular; sequence VSDQNSLYPLLEATNNDDIYAAAW. Residues 61-81 form a helical membrane-spanning segment; it reads IGMFVGICLFCLSVLGIVGIM. At 82–86 the chain is on the cytoplasmic side; it reads KSNRK. A helical membrane pass occupies residues 87–107; that stretch reads ILLVYFILMFIVYAFEVASCI. Residues 108 to 229 are Extracellular-facing; the sequence is TAATQRDFFT…ELISGPMNRH (122 aa). Residues 230–250 form a helical membrane-spanning segment; sequence AWGVAWFGFAILCWTFWVLLG. Residues 251–260 are Cytoplasmic-facing; it reads TMFYWSRIDY.

The protein belongs to the tetraspanin (TM4SF) family. As to quaternary structure, heterodimer with uroplakin-3A (UPK3A) or uroplakin-3B (UPK3B). Post-translationally, N-glycosylated with high-mannose oligosaccharides. Bladder epithelium.

It localises to the membrane. In terms of biological role, component of the asymmetric unit membrane (AUM); a highly specialized biomembrane elaborated by terminally differentiated urothelial cells. May play an important role in normal bladder epithelial physiology, possibly in regulating membrane permeability of superficial umbrella cells or in stabilizing the apical membrane through AUM/cytoskeletal interactions. The chain is Uroplakin-1b (UPK1B) from Bos taurus (Bovine).